Consider the following 215-residue polypeptide: 3-demethoxyubiquinol 3-hydroxylase (215 aa).

6 residues coordinate Fe cation: glutamate 64, glutamate 94, histidine 97, glutamate 146, glutamate 178, and histidine 181.

This sequence belongs to the COQ7 family. The cofactor is Fe cation.

Its subcellular location is the cell membrane. It carries out the reaction a 5-methoxy-2-methyl-3-(all-trans-polyprenyl)benzene-1,4-diol + AH2 + O2 = a 3-demethylubiquinol + A + H2O. It functions in the pathway cofactor biosynthesis; ubiquinone biosynthesis. Catalyzes the hydroxylation of 2-nonaprenyl-3-methyl-6-methoxy-1,4-benzoquinol during ubiquinone biosynthesis. This chain is 3-demethoxyubiquinol 3-hydroxylase, found in Pseudomonas putida (strain GB-1).